A 126-amino-acid polypeptide reads, in one-letter code: Ribosome-binding factor A (126 aa).

It belongs to the RbfA family. Monomer. Binds 30S ribosomal subunits, but not 50S ribosomal subunits or 70S ribosomes.

It localises to the cytoplasm. Its function is as follows. One of several proteins that assist in the late maturation steps of the functional core of the 30S ribosomal subunit. Associates with free 30S ribosomal subunits (but not with 30S subunits that are part of 70S ribosomes or polysomes). Required for efficient processing of 16S rRNA. May interact with the 5'-terminal helix region of 16S rRNA. The chain is Ribosome-binding factor A from Thermosipho africanus (strain TCF52B).